We begin with the raw amino-acid sequence, 1158 residues long: Rho1 guanine nucleotide exchange factor 2 (1158 aa).

Residues 42–141 (RSSGSITHSP…SFSVSDVSNG (100 aa)) are disordered. Residues 45 to 63 (GSITHSPTALSSTTSLNEN) show a composition bias toward polar residues. A compositionally biased stretch (low complexity) spans 68–81 (FRPASSLSFSPSSL). The segment covering 97 to 108 (KNNFYRRSSSTD) has biased composition (polar residues). A compositionally biased stretch (low complexity) spans 132–141 (SFSVSDVSNG). Residues 447-634 (KRQEIIFEVI…REFLTKLNYE (188 aa)) enclose the DH domain. The region spanning 670–805 (LIFKGVVKLK…QHIEKQQDII (136 aa)) is the PH domain. 2 positions are modified to phosphoserine: Ser746 and Ser747. The region spanning 825 to 1120 (GNKLLCAVAY…KLLTDGRGLI (296 aa)) is the CNH domain.

The protein resides in the cytoplasm. Functionally, stimulates the exchange of Rho1 and Rho5 GDP-bound form into GTP-bound form. Controls septum formation, cell wall synthesis and localization of F-actin patches. This Schizosaccharomyces pombe (strain 972 / ATCC 24843) (Fission yeast) protein is Rho1 guanine nucleotide exchange factor 2 (rgf2).